The primary structure comprises 660 residues: Neurexin-2-beta (660 aa).

A compositionally biased stretch (gly residues) spans 1 to 10 (MPPGGSGQGG). Positions 1–27 (MPPGGSGQGGCPRRPPALAGPLPPPPP) are disordered. Positions 1-46 (MPPGGSGQGGCPRRPPALAGPLPPPPPPPPLPLLLGLLLLLGAAEG) are cleaved as a signal peptide. Over 47 to 584 (ARVSSSLSTT…EVIRESSSTT (538 aa)) the chain is Extracellular. The region spanning 87-295 (TTYIFGKGGA…HLRLVGEGPS (209 aa)) is the Laminin G-like domain. Residues D139 and V156 each contribute to the Ca(2+) site. N-linked (GlcNAc...) asparagine glycosylation is present at N186. Ca(2+) contacts are provided by I238 and N240. S350 carries an O-linked (Xyl...) (heparan sulfate) serine glycan. Disordered regions lie at residues 408–458 (ATQD…LPPT) and 537–571 (EPRR…RGPP). Residue N561 is glycosylated (N-linked (GlcNAc...) asparagine). A helical membrane pass occupies residues 585–605 (GMVVGIVAAAALCILILLYAM). The Cytoplasmic portion of the chain corresponds to 606–660 (YKYRNRDEGSYQVDQSRNYISNSAQSNGAVVKEKAPAAPKTPSKAKKNKDKEYYV). Residues 627–660 (NSAQSNGAVVKEKAPAAPKTPSKAKKNKDKEYYV) form a disordered region.

The protein belongs to the neurexin family. As to quaternary structure, interacts (via cytoplasmic C-terminal region) with CASK. Specific isoforms bind alpha-dystroglycan and neuroligins NLGN1, NLGN2 and NLGN3. Interacts with CBLN1, CBLN2 and, less avidly, with CBLN4. Interacts with CLSTN3. O-glycosylated; contains heparan sulfate. Heparan sulfate attachment is required for synapse development by mediating interactions with neuroligins.

It localises to the presynaptic cell membrane. Neuronal cell surface protein that may be involved in cell recognition and cell adhesion. This chain is Neurexin-2-beta, found in Mus musculus (Mouse).